A 273-amino-acid chain; its full sequence is Cilia- and flagella-associated protein 298-B (273 aa).

The protein belongs to the CFAP298 family.

The protein resides in the cytoplasm. The protein localises to the cytoskeleton. Its subcellular location is the cilium basal body. Its function is as follows. Plays a role in motile cilium function, possibly by acting on outer dynein arm assembly. Seems to be important for initiation rather than maintenance of cilium motility. Required for correct positioning of the cilium at the apical cell surface, suggesting an additional role in the planar cell polarity (PCP) pathway. May suppress canonical Wnt signaling activity. In Xenopus laevis (African clawed frog), this protein is Cilia- and flagella-associated protein 298-B (cfap298-b).